We begin with the raw amino-acid sequence, 384 residues long: MYTKKPTIPEDVIERAYRGKCTKEDALLLLEGNPFELFELANDLRASTVGDAVSYVVNRNIYITNKCVGNCGFCAYRTEKGYILSVEEILEKAGEARKAGAVEVCIQGGYIPEADIEFYLEIIESVKAEFPDLCIHALSPMEVNYAAGLSGMSVEEALHRLKKSGLDSLTGTSAEILSDRVRKIICPGKINTQQWIDTITAAHKAGISTNSTIMYGHVETLEERLDHVFIIREIQKETGGFTELIPMAFLPYNNPIGEKMIASGKFSTTGLEDLQLIAISRVILHTYVKNIQATWVKLGKKLAQVALQCGANDLGGTLMEDQISTASGGSNGEYVSPAEFEWMIKGAGRTPMQRDTLYRKVEPVIANRVEPLPGLGKTKIGSRD.

Residues valine 53 to threonine 286 enclose the Radical SAM core domain. [4Fe-4S] cluster is bound by residues cysteine 67, cysteine 71, and cysteine 74.

Belongs to the radical SAM superfamily. CofH family. As to quaternary structure, consists of two subunits, CofG and CofH. Requires [4Fe-4S] cluster as cofactor.

The catalysed reaction is 5-amino-6-(D-ribitylamino)uracil + L-tyrosine + S-adenosyl-L-methionine = 5-amino-5-(4-hydroxybenzyl)-6-(D-ribitylimino)-5,6-dihydrouracil + 2-iminoacetate + 5'-deoxyadenosine + L-methionine + H(+). The protein operates within cofactor biosynthesis; coenzyme F0 biosynthesis. Its function is as follows. Catalyzes the radical-mediated synthesis of 5-amino-5-(4-hydroxybenzyl)-6-(D-ribitylimino)-5,6-dihydrouracil from 5-amino-6-(D-ribitylamino)uracil and L-tyrosine. This is 5-amino-6-(D-ribitylamino)uracil--L-tyrosine 4-hydroxyphenyl transferase 2 from Methanosarcina barkeri (strain Fusaro / DSM 804).